The chain runs to 415 residues: Mitogen-activated protein kinase MPS1 (415 aa).

Residues 23–314 form the Protein kinase domain; sequence YTVTKELGQG…VEQALEHPYL (292 aa). Residues 29–37 and lysine 52 contribute to the ATP site; that span reads LGQGAYGIV. A disordered region spans residues 363–394; that stretch reads GAGGHGAPHAPQVPIPAGAGQGQWKAEDPRPQ.

This sequence belongs to the protein kinase superfamily. Ser/Thr protein kinase family. MAP kinase subfamily. In terms of assembly, interacts with transcription factor MIG1. Interacts with transcription factor SWI6. Requires Mg(2+) as cofactor.

It catalyses the reaction L-seryl-[protein] + ATP = O-phospho-L-seryl-[protein] + ADP + H(+). The enzyme catalyses L-threonyl-[protein] + ATP = O-phospho-L-threonyl-[protein] + ADP + H(+). Mitogen-activated protein kinase; part of the MCK1-MKK2-MPS1 MAP kinase (MAPK) signal transduction cascade that is essential for cell wall integrity and plant infection, but not for plant defense responses. Beside its role in pathogenesis, the MPS1 cascade is active in conidiation and cellular stress responses. Targets downstream of the MPS1-MAPK pathway include transcription factors MIG1 and SWI6, as well as GSK1 and MPG1. In Pyricularia oryzae (strain 70-15 / ATCC MYA-4617 / FGSC 8958) (Rice blast fungus), this protein is Mitogen-activated protein kinase MPS1.